Consider the following 121-residue polypeptide: Aspartate 1-decarboxylase (121 aa).

Residue S25 is the Schiff-base intermediate with substrate; via pyruvic acid of the active site. S25 is subject to Pyruvic acid (Ser). Substrate is bound at residue T57. Y58 acts as the Proton donor in catalysis. Residue 73–75 participates in substrate binding; that stretch reads GAA.

This sequence belongs to the PanD family. As to quaternary structure, heterooctamer of four alpha and four beta subunits. The cofactor is pyruvate. Is synthesized initially as an inactive proenzyme, which is activated by self-cleavage at a specific serine bond to produce a beta-subunit with a hydroxyl group at its C-terminus and an alpha-subunit with a pyruvoyl group at its N-terminus.

It localises to the cytoplasm. The enzyme catalyses L-aspartate + H(+) = beta-alanine + CO2. The protein operates within cofactor biosynthesis; (R)-pantothenate biosynthesis; beta-alanine from L-aspartate: step 1/1. Catalyzes the pyruvoyl-dependent decarboxylation of aspartate to produce beta-alanine. The chain is Aspartate 1-decarboxylase from Sulfurimonas denitrificans (strain ATCC 33889 / DSM 1251) (Thiomicrospira denitrificans (strain ATCC 33889 / DSM 1251)).